The primary structure comprises 298 residues: Tyrosine recombinase XerC (298 aa).

The 87-residue stretch at T2–V88 folds into the Core-binding (CB) domain. The Tyr recombinase domain occupies H109–D288. Catalysis depends on residues R148, K172, H240, R243, and H266. The O-(3'-phospho-DNA)-tyrosine intermediate role is filled by Y275.

Belongs to the 'phage' integrase family. XerC subfamily. As to quaternary structure, forms a cyclic heterotetrameric complex composed of two molecules of XerC and two molecules of XerD, in which XerC interacts with XerD via its C-terminal region, XerD interacts with XerC via its C-terminal region and so on.

The protein resides in the cytoplasm. Its activity is regulated as follows. FtsK may regulate the catalytic switch between XerC and XerD in the heterotetrameric complex during the two steps of the recombination process. Functionally, site-specific tyrosine recombinase, which acts by catalyzing the cutting and rejoining of the recombining DNA molecules. Binds cooperatively to specific DNA consensus sequences that are separated from XerD binding sites by a short central region, forming the heterotetrameric XerC-XerD complex that recombines DNA substrates. The complex is essential to convert dimers of the bacterial chromosome into monomers to permit their segregation at cell division. It also contributes to the segregational stability of plasmids. In the complex XerC specifically exchanges the top DNA strands. In Escherichia coli O157:H7, this protein is Tyrosine recombinase XerC.